A 192-amino-acid chain; its full sequence is Dynein axonemal light chain 1 (192 aa).

LRR repeat units follow at residues 49–70, 71–92, 94–115, and 116–137; these read NCEKLSLSTNCIEKIANLNGLK, YLKILSLGRNNIKNLNGLEAVG, TLEELWISYNLIEKLKGIHVMK, and KLKVLYMSNNLVKDWAEFSKLG. One can recognise an LRRCT domain in the interval 150–192; it reads NPLEEKHTAEGNWMEEAVKRLPKLKKLDGNPVIKQEEEEGDES.

The protein belongs to the dynein light chain LC1-type family. Interacts with DNAH5, a outer arm dynein heavy chain. Interacts with tubulin located within the A-tubule of the outer doublets in a ATP-independent manner.

It is found in the cytoplasm. Its subcellular location is the cytoskeleton. It localises to the cilium axoneme. Its function is as follows. Part of the multisubunit axonemal ATPase complexes that generate the force for cilia motility and govern beat frequency. Component of the outer arm dynein (ODA). May be involved in a mechanosensory feedback mechanism controlling ODA activity based on external conformational cues by tethering the outer arm dynein heavy chain (DNAH5) to the microtubule within the axoneme. The chain is Dynein axonemal light chain 1 (dnal1) from Xenopus laevis (African clawed frog).